Reading from the N-terminus, the 101-residue chain is Large ribosomal subunit protein uL24 (101 aa).

It belongs to the universal ribosomal protein uL24 family. As to quaternary structure, part of the 50S ribosomal subunit.

In terms of biological role, one of two assembly initiator proteins, it binds directly to the 5'-end of the 23S rRNA, where it nucleates assembly of the 50S subunit. One of the proteins that surrounds the polypeptide exit tunnel on the outside of the subunit. This Borrelia turicatae (strain 91E135) protein is Large ribosomal subunit protein uL24.